The chain runs to 327 residues: AA9 family lytic polysaccharide monooxygenase B (327 aa).

The first 19 residues, 1 to 19, serve as a signal peptide directing secretion; that stretch reads MKSFTATALAALLAQQAAA. Residues histidine 20 and histidine 98 each contribute to the Cu(2+) site. A disulfide bond links cysteine 68 and cysteine 192. O2 is bound by residues histidine 178 and glutamine 187. Residue tyrosine 189 participates in Cu(2+) binding. Positions 264–280 are enriched in low complexity; the sequence is SPTTSLTPPVSTSTPAP. Residues 264–284 form a disordered region; it reads SPTTSLTPPVSTSTPAPGNGG. Positions 291 to 327 constitute a CBM1 domain; the sequence is CTVQKYGQCGGQGYTGCTTCAAGSTCNTTNQWYHQCV. The N-linked (GlcNAc...) asparagine glycan is linked to asparagine 317.

This sequence belongs to the polysaccharide monooxygenase AA9 family. Cu(2+) is required as a cofactor.

The protein localises to the secreted. It carries out the reaction [(1-&gt;4)-beta-D-glucosyl]n+m + reduced acceptor + O2 = 4-dehydro-beta-D-glucosyl-[(1-&gt;4)-beta-D-glucosyl]n-1 + [(1-&gt;4)-beta-D-glucosyl]m + acceptor + H2O.. Its function is as follows. Lytic polysaccharide monooxygenase (LPMO) that depolymerizes crystalline and amorphous polysaccharides via the oxidation of scissile alpha- or beta-(1-4)-glycosidic bonds, yielding C1 or C4 oxidation products. Catalysis by LPMOs requires the reduction of the active-site copper from Cu(II) to Cu(I) by a reducing agent and H(2)O(2) or O(2) as a cosubstrate. The sequence is that of AA9 family lytic polysaccharide monooxygenase B (LPMO9B) from Podospora anserina (strain S / ATCC MYA-4624 / DSM 980 / FGSC 10383) (Pleurage anserina).